Reading from the N-terminus, the 304-residue chain is dTDP-4-dehydrorhamnose reductase (304 aa).

Residues 16–18 (GML), 42–43 (DI), and 66–68 (AWT) each bind NADH. Residues 17–18 (ML), 42–43 (DI), and 66–68 (AWT) contribute to the NADPH site. 107–108 (TD) is a binding site for dTDP-beta-L-rhamnose. Positions 131 and 135 each coordinate NADH. NADPH-binding residues include Y131 and K135. The Proton donor/acceptor role is filled by Y131. DTDP-beta-L-rhamnose is bound at residue W157.

The protein belongs to the dTDP-4-dehydrorhamnose reductase family. In terms of assembly, homodimer. Mg(2+) is required as a cofactor.

It catalyses the reaction dTDP-beta-L-rhamnose + NADP(+) = dTDP-4-dehydro-beta-L-rhamnose + NADPH + H(+). Its pathway is carbohydrate biosynthesis; dTDP-L-rhamnose biosynthesis. The protein operates within antibiotic biosynthesis; streptomycin biosynthesis. Involved in the biosynthesis of the streptose moiety of streptomycin. Catalyzes the reduction of dTDP-6-deoxy-L-lyxo-4-hexulose to yield dTDP-L-rhamnose. RmlD uses NADH and NADPH nearly equally well. The protein is dTDP-4-dehydrorhamnose reductase of Streptomyces griseus.